A 130-amino-acid polypeptide reads, in one-letter code: Small ribosomal subunit protein uS9 (130 aa).

It belongs to the universal ribosomal protein uS9 family.

This chain is Small ribosomal subunit protein uS9, found in Pectobacterium carotovorum subsp. carotovorum (strain PC1).